Consider the following 936-residue polypeptide: Altered inheritance of mitochondria protein 3 (936 aa).

Disordered regions lie at residues 1–315 (MGFW…LNQN), 341–795 (MSST…EATG), 818–893 (NLEK…KSLE), and 908–936 (SAAD…HKLK). Positions 36-54 (ASKKHYNNSKARRERKSGK) are enriched in basic residues. A phosphoserine mark is found at serine 57, serine 58, and serine 64. Positions 59-68 (DEEYESEDEM) are enriched in acidic residues. Positions 69–84 (EHERKPTDIRSLKDPK) are enriched in basic and acidic residues. Composition is skewed to low complexity over residues 93–105 (PGQK…QQQQ) and 130–152 (QSQY…GVMP). The segment covering 166 to 244 (GSNSNATSYQ…YVSHGSTNLG (79 aa)) has biased composition (polar residues). Low complexity-rich tracts occupy residues 245-267 (QSQF…VLPS) and 306-315 (QQQQQPLNQN). Residues 341-354 (MSSTTNMQDSNPSY) show a composition bias toward polar residues. Residues 366–382 (GGQPPVPVRMQPQPPQP) show a composition bias toward pro residues. Polar residues predominate over residues 453-462 (IQPNTTSSAA). At serine 463 the chain carries Phosphoserine. Basic and acidic residues-rich tracts occupy residues 475–489 (DNER…DEST), 513–528 (HGLD…KNAS), and 598–615 (EIKD…DRNV). Composition is skewed to low complexity over residues 622–632 (QSKSQSQSQSQ) and 656–665 (SQSSNSSDSS). Phosphothreonine is present on threonine 718. Basic and acidic residues predominate over residues 738–748 (DSSKDANKYEK). Polar residues predominate over residues 752–763 (PVTSSIQAQQST). A Phosphothreonine modification is found at threonine 850. The span at 851 to 868 (PPRPPPSRSSPKKVPPVV) shows a compositional bias: pro residues. Residues 877-888 (KKPPVVPKKKPL) show a composition bias toward basic residues.

Belongs to the AIM3 family. As to quaternary structure, interacts with RVS167.

It is found in the membrane raft. This is Altered inheritance of mitochondria protein 3 (AIM3) from Saccharomyces cerevisiae (strain RM11-1a) (Baker's yeast).